An 84-amino-acid chain; its full sequence is uncharacterized protein (84 aa).

It belongs to the chlamydial CPn_0711/CT_665/TC_0036 family.

This is an uncharacterized protein from Chlamydia muridarum (strain MoPn / Nigg).